Consider the following 178-residue polypeptide: Sec-independent protein translocase protein TatB (178 aa).

A helical transmembrane segment spans residues M1–G21. Residues T77–T86 show a composition bias toward polar residues. The interval T77 to S178 is disordered. A compositionally biased stretch (basic and acidic residues) spans P93–A102. The segment covering H155–H165 has biased composition (low complexity). Basic and acidic residues predominate over residues E166–S178.

It belongs to the TatB family. In terms of assembly, the Tat system comprises two distinct complexes: a TatABC complex, containing multiple copies of TatA, TatB and TatC subunits, and a separate TatA complex, containing only TatA subunits. Substrates initially bind to the TatABC complex, which probably triggers association of the separate TatA complex to form the active translocon.

It localises to the cell inner membrane. Its function is as follows. Part of the twin-arginine translocation (Tat) system that transports large folded proteins containing a characteristic twin-arginine motif in their signal peptide across membranes. Together with TatC, TatB is part of a receptor directly interacting with Tat signal peptides. TatB may form an oligomeric binding site that transiently accommodates folded Tat precursor proteins before their translocation. This chain is Sec-independent protein translocase protein TatB, found in Nitrobacter hamburgensis (strain DSM 10229 / NCIMB 13809 / X14).